A 115-amino-acid polypeptide reads, in one-letter code: Large ribosomal subunit protein bL20 (115 aa).

Belongs to the bacterial ribosomal protein bL20 family.

In terms of biological role, binds directly to 23S ribosomal RNA and is necessary for the in vitro assembly process of the 50S ribosomal subunit. It is not involved in the protein synthesizing functions of that subunit. In Synechococcus sp. (strain WH7803), this protein is Large ribosomal subunit protein bL20.